Reading from the N-terminus, the 482-residue chain is Membrane-bound lytic murein transglycosylase F (482 aa).

Positions 1–18 (MKGLFLRIITALALLFWA) are cleaved as a signal peptide. A non-LT domain region spans residues 19 to 267 (IDMVFPWQFL…NLKEKYLGHI (249 aa)). The segment at 268-482 (SQFDYVDTRS…NLEEIKENKD (215 aa)) is LT domain. Glu312 is an active-site residue. The span at 457 to 470 (ENQTTNDNANNESA) shows a compositional bias: polar residues. Positions 457–482 (ENQTTNDNANNESAVKNLEEIKENKD) are disordered. The span at 473–482 (NLEEIKENKD) shows a compositional bias: basic and acidic residues.

The protein in the N-terminal section; belongs to the bacterial solute-binding protein 3 family. This sequence in the C-terminal section; belongs to the transglycosylase Slt family.

The protein localises to the cell outer membrane. The enzyme catalyses Exolytic cleavage of the (1-&gt;4)-beta-glycosidic linkage between N-acetylmuramic acid (MurNAc) and N-acetylglucosamine (GlcNAc) residues in peptidoglycan, from either the reducing or the non-reducing ends of the peptidoglycan chains, with concomitant formation of a 1,6-anhydrobond in the MurNAc residue.. Murein-degrading enzyme that degrades murein glycan strands and insoluble, high-molecular weight murein sacculi, with the concomitant formation of a 1,6-anhydromuramoyl product. Lytic transglycosylases (LTs) play an integral role in the metabolism of the peptidoglycan (PG) sacculus. Their lytic action creates space within the PG sacculus to allow for its expansion as well as for the insertion of various structures such as secretion systems and flagella. The polypeptide is Membrane-bound lytic murein transglycosylase F (Haemophilus influenzae (strain 86-028NP)).